A 103-amino-acid polypeptide reads, in one-letter code: Acylphosphatase-2 (103 aa).

Residue Ser2 is modified to N-acetylserine. In terms of domain architecture, Acylphosphatase-like spans 13 to 103; the sequence is SVDYEVFGRV…LDFSGFSTRY (91 aa). Residues Arg28 and Asn46 contribute to the active site.

It belongs to the acylphosphatase family.

The enzyme catalyses an acyl phosphate + H2O = a carboxylate + phosphate + H(+). Functionally, its physiological role is not yet clear. The chain is Acylphosphatase-2 (ACYP2) from Anas platyrhynchos (Mallard).